Reading from the N-terminus, the 201-residue chain is Heat shock protein beta-1 (201 aa).

Arg12 is subject to Omega-N-methylarginine. Ser15 is subject to Phosphoserine; by MAPKAPK2 and MAPKAPK3. Ser27 carries the phosphoserine modification. Residues 68–201 (AYNRALSRQL…AGKSEQPENK (134 aa)) are interaction with TGFB1I1. In terms of domain architecture, sHSP spans 72 to 180 (ALSRQLSSGV…QSAEITIPVT (109 aa)). 2 positions are modified to phosphoserine; by MAPKAPK2, MAPKAPK3 and MAPKAPK5: Ser74 and Ser78. Ser79, Ser82, and Ser94 each carry phosphoserine. Lys119 bears the N6-acetyllysine mark. Thr170 bears the Phosphothreonine mark. Ser172 and Ser195 each carry phosphoserine.

The protein belongs to the small heat shock protein (HSP20) family. In terms of assembly, homooligomer. Homodimer; becomes monomeric upon activation. Heterooligomer; with HSPB6. Associates with alpha- and beta-tubulin. Interacts with TGFB1I1. Interacts with CRYAB. Interacts with HSPB8. Interacts with HSPBAP1. Phosphorylated upon exposure to protein kinase C activators and heat shock. Phosphorylation by MAPKAPK2 and MAPKAPK3 in response to stress dissociates HSPB1 from large small heat-shock protein (sHsps) oligomers and impairs its chaperone activity and ability to protect against oxidative stress effectively. Phosphorylation by MAPKAPK5 in response to PKA stimulation induces F-actin rearrangement.

It localises to the cytoplasm. The protein localises to the nucleus. It is found in the cytoskeleton. The protein resides in the spindle. Functionally, small heat shock protein which functions as a molecular chaperone probably maintaining denatured proteins in a folding-competent state. Plays a role in stress resistance and actin organization. Through its molecular chaperone activity may regulate numerous biological processes including the phosphorylation and the axonal transport of neurofilament proteins. The sequence is that of Heat shock protein beta-1 (HSPB1) from Bos taurus (Bovine).